The chain runs to 328 residues: MKQVVYTASPNSCQIHVWSLNNEGELSLIQTVDVPGEVQPMVVSPDRKHLYVGIRPQFSIVTYQIGSRGELAQQGISSIPGSPTHISTDKQGRFLFSASYSYNNLSVSLIDDQGIVGEPVQVIAGLQAPHSANIDWDNKQLLVPCLKEDRVRIFEMAKEGYLTEKRAEEITTAMGAGPRHMAFHPNQQVIYCINELDSTVDVYRKWEKYRTVQTVDSLPADLAGVRWSADIHITPDGRHLYTSERTSSLISHFVISQDGSNLTLAGHYKTEIQPRGFAIDHSGKYLIASGQKSDHISVSSIDKYTGKLTELTRYPVGKGPMWVTVLAL.

Belongs to the cycloisomerase 2 family.

It carries out the reaction 6-phospho-D-glucono-1,5-lactone + H2O = 6-phospho-D-gluconate + H(+). It functions in the pathway carbohydrate degradation; pentose phosphate pathway; D-ribulose 5-phosphate from D-glucose 6-phosphate (oxidative stage): step 2/3. In terms of biological role, catalyzes the hydrolysis of 6-phosphogluconolactone to 6-phosphogluconate. This is 6-phosphogluconolactonase from Photorhabdus laumondii subsp. laumondii (strain DSM 15139 / CIP 105565 / TT01) (Photorhabdus luminescens subsp. laumondii).